A 63-amino-acid polypeptide reads, in one-letter code: Large ribosomal subunit protein uL30 (63 aa).

The protein belongs to the universal ribosomal protein uL30 family. In terms of assembly, part of the 50S ribosomal subunit.

This is Large ribosomal subunit protein uL30 from Hahella chejuensis (strain KCTC 2396).